We begin with the raw amino-acid sequence, 401 residues long: tRNA (guanine-N(7)-)-methyltransferase non-catalytic subunit wuho (401 aa).

Residues 45–85 (KGRPRKYFDADSDSDEEQQNGDEPGTGKNNGGGDTGKKDQD) form a disordered region. Acidic residues predominate over residues 54–64 (ADSDSDEEQQN). 3 WD repeats span residues 86–125 (DQTNAIVALDVNEDRSLVAVATGDKSLYLFEVDQDGRTLK), 174–213 (GHMSQVLDVLIDTEEKLIITSDRDEKIRVTCHPDCHNIET), and 217–255 (GHTEFVSHLEFLGPELLLSLSGDKTLRWWNYTSGKELAR).

This sequence belongs to the WD repeat TRM82 family. Forms a heterodimer with the catalytic subunit.

It localises to the nucleus. The protein operates within tRNA modification; N(7)-methylguanine-tRNA biosynthesis. In terms of biological role, required for the formation of N(7)-methylguanine at position 46 (m7G46) in tRNA. In the complex, it is required to stabilize and induce conformational changes of the catalytic subunit. This Culex quinquefasciatus (Southern house mosquito) protein is tRNA (guanine-N(7)-)-methyltransferase non-catalytic subunit wuho.